The chain runs to 280 residues: Probable cell division protein WhiA (280 aa).

The segment at residues 247–279 is a DNA-binding region (H-T-H motif); it reads SLEQIANFFFTKYNIKISRSGIQHFSVNLKKLC.

It belongs to the WhiA family.

Functionally, involved in cell division and chromosome segregation. The protein is Probable cell division protein WhiA of Mycoplasma genitalium (strain ATCC 33530 / DSM 19775 / NCTC 10195 / G37) (Mycoplasmoides genitalium).